The sequence spans 557 residues: MSLIKKKNKDIRIIPLGGVGEIAKNMYIVEVDDEMFMLDAGLMFPEDEMLGIDIVIPDISYVLENKEKLKGIFLTHGHEHAIGAVSYVLEQLDAPVYGSKLTIALIKENMKARNIDKKVRYYTVNNDSIMRFKNVNISFFNTTHSIPDSLGVCIHTSYGAIVYTGEFKFDQSLHGHYAPDIKRMAEIGEEGVFVLISDSTEAEKPGYNTPENVIEHHMYDAFAKVRGRLIVSCYASNFIRIQQVLNIASKLNRKVSFLGRSLESSFNIARKMGYFDIPKDLLIPITEVDNYPKNEVIIIATGMQGEPVEALSQMAQHKHKIMNIEEGDSVFLAITASANMEVIIANTLNELVRAGAHIIPNNKKIHASSHGCMEELKMMINIMKPEYFIPVQGEFKMQIAHAKLAAEAGVAPEKIFLVEKGDVINYNGKDMILNEKVNSGNILIDGIGIGDVGNIVLRDRHLLAEDGIFIAVVTLDPKNRRIAAGPEIQSRGFVYVRESEDLLREAEEKVREIVEAGLQEKRIEWSEIKQNMRDQISKLLFESTKRRPMIIPVISEI.

Zn(2+) contacts are provided by H76, H78, H144, and E166. 366 to 370 (HASSH) lines the substrate pocket.

This sequence belongs to the metallo-beta-lactamase superfamily. RNA-metabolizing metallo-beta-lactamase-like family. Bacterial RNase J subfamily. In terms of assembly, homodimer, may be a subunit of the RNA degradosome. Zn(2+) serves as cofactor.

The protein localises to the cytoplasm. An RNase that has 5'-3' exonuclease and possibly endoonuclease activity. Involved in maturation of rRNA and in some organisms also mRNA maturation and/or decay. This is Ribonuclease J 2 from Staphylococcus aureus (strain MRSA252).